The following is a 35-amino-acid chain: Putative neurotoxin (35 aa).

An LCN-type CS-alpha/beta domain is found at 1-35 (KEGYPKNSEGCKITCLFNDPYCKGLCINLSTQADY).

Expressed by the venom gland.

It is found in the secreted. Causes paralysis and death in insects (A.domestica). This is Putative neurotoxin from Rhopalurus junceus (Caribbean blue scorpion).